A 776-amino-acid polypeptide reads, in one-letter code: 5-methyltetrahydropteroyltriglutamate--homocysteine methyltransferase (776 aa).

Residues 13-16 and Lys-127 contribute to the 5-methyltetrahydropteroyltri-L-glutamate site; that span reads RELK. Residues 450–452 and Glu-503 each bind L-homocysteine; that span reads IGS. L-methionine is bound by residues 450-452 and Glu-503; that span reads IGS. Trp-580 lines the 5-methyltetrahydropteroyltri-L-glutamate pocket. An L-homocysteine-binding site is contributed by Asp-618. Asp-618 serves as a coordination point for L-methionine. Glu-624 serves as a coordination point for 5-methyltetrahydropteroyltri-L-glutamate. 3 residues coordinate Zn(2+): His-660, Cys-662, and Glu-684. The Proton donor role is filled by His-713. Cys-745 is a Zn(2+) binding site.

It belongs to the vitamin-B12 independent methionine synthase family. Requires Zn(2+) as cofactor.

The catalysed reaction is 5-methyltetrahydropteroyltri-L-glutamate + L-homocysteine = tetrahydropteroyltri-L-glutamate + L-methionine. Its pathway is amino-acid biosynthesis; L-methionine biosynthesis via de novo pathway; L-methionine from L-homocysteine (MetE route): step 1/1. Catalyzes the transfer of a methyl group from 5-methyltetrahydrofolate to homocysteine resulting in methionine formation. The protein is 5-methyltetrahydropteroyltriglutamate--homocysteine methyltransferase of Mesorhizobium japonicum (strain LMG 29417 / CECT 9101 / MAFF 303099) (Mesorhizobium loti (strain MAFF 303099)).